Here is a 328-residue protein sequence, read N- to C-terminus: MNSETISAQAPATLTIASRESRLAMWQAEHVRDALRKLYPACDVKILGMTTRGDQILDRTLSKVGGKGLFVKELENALADGRADLAVHSLKDVPMALPDGFALTAIMEREDPRDAFVSNDYASLDALPAGAVVGTSSLRREAMLRARYPHLDVLPLRGNLDTRLAKLDRGDYAAIILAAAGLKRLGLEARIRTLIDVEDSPPAAGQGALGIEIATHRTDVAAWLAPLHDPRTALAVEAERMVSRALGGSCEVPLAAHAVWRAGELYLTGRVSTTDGQRVLTAEECGAVMTVADALALGRAVSDELEAQGALDIVNALLAASQAGKGDA.

At cysteine 250 the chain carries S-(dipyrrolylmethanemethyl)cysteine.

It belongs to the HMBS family. As to quaternary structure, monomer. Dipyrromethane is required as a cofactor.

It catalyses the reaction 4 porphobilinogen + H2O = hydroxymethylbilane + 4 NH4(+). It functions in the pathway porphyrin-containing compound metabolism; protoporphyrin-IX biosynthesis; coproporphyrinogen-III from 5-aminolevulinate: step 2/4. In terms of biological role, tetrapolymerization of the monopyrrole PBG into the hydroxymethylbilane pre-uroporphyrinogen in several discrete steps. In Burkholderia ambifaria (strain ATCC BAA-244 / DSM 16087 / CCUG 44356 / LMG 19182 / AMMD) (Burkholderia cepacia (strain AMMD)), this protein is Porphobilinogen deaminase.